The following is a 292-amino-acid chain: Protease HtpX (292 aa).

Helical transmembrane passes span 5–25 and 34–54; these read IFLF…VMSL and SGLL…SLLL. Zn(2+) is bound at residue His140. The active site involves Glu141. His144 contributes to the Zn(2+) binding site. 2 consecutive transmembrane segments (helical) span residues 155–175 and 193–213; these read LLQG…GGII and IIVF…AMWF. Glu218 contacts Zn(2+).

Belongs to the peptidase M48B family. Requires Zn(2+) as cofactor.

It localises to the cell inner membrane. In Xanthomonas axonopodis pv. citri (strain 306), this protein is Protease HtpX.